Here is a 408-residue protein sequence, read N- to C-terminus: Na(+)/H(+) antiporter NhaA (408 aa).

Helical transmembrane passes span Leu-42–Phe-62, Val-69–Leu-89, Ala-110–Val-130, Gly-140–Gly-160, Ile-169–Phe-189, Ala-192–Leu-212, Phe-215–Leu-235, Gly-238–Thr-258, Val-277–Leu-297, Leu-312–Leu-332, Leu-346–Leu-366, and Ile-380–Thr-400.

It belongs to the NhaA Na(+)/H(+) (TC 2.A.33) antiporter family.

The protein resides in the cell inner membrane. It carries out the reaction Na(+)(in) + 2 H(+)(out) = Na(+)(out) + 2 H(+)(in). Na(+)/H(+) antiporter that extrudes sodium in exchange for external protons. This chain is Na(+)/H(+) antiporter NhaA, found in Nitrobacter hamburgensis (strain DSM 10229 / NCIMB 13809 / X14).